Consider the following 484-residue polypeptide: UDP-N-acetylmuramoyl-L-alanyl-D-glutamate--2,6-diaminopimelate ligase (484 aa).

S30 lines the UDP-N-acetyl-alpha-D-muramoyl-L-alanyl-D-glutamate pocket. Position 109–115 (109–115) interacts with ATP; the sequence is GTNGKTS. UDP-N-acetyl-alpha-D-muramoyl-L-alanyl-D-glutamate is bound by residues 151-152, S178, and R186; that span reads TT. K218 bears the N6-carboxylysine mark. Meso-2,6-diaminopimelate contacts are provided by residues R379, 403–406, G455, and E459; that span reads DNPR. A Meso-diaminopimelate recognition motif motif is present at residues 403-406; sequence DNPR.

Belongs to the MurCDEF family. MurE subfamily. Requires Mg(2+) as cofactor. Carboxylation is probably crucial for Mg(2+) binding and, consequently, for the gamma-phosphate positioning of ATP.

It is found in the cytoplasm. It carries out the reaction UDP-N-acetyl-alpha-D-muramoyl-L-alanyl-D-glutamate + meso-2,6-diaminopimelate + ATP = UDP-N-acetyl-alpha-D-muramoyl-L-alanyl-gamma-D-glutamyl-meso-2,6-diaminopimelate + ADP + phosphate + H(+). It functions in the pathway cell wall biogenesis; peptidoglycan biosynthesis. Catalyzes the addition of meso-diaminopimelic acid to the nucleotide precursor UDP-N-acetylmuramoyl-L-alanyl-D-glutamate (UMAG) in the biosynthesis of bacterial cell-wall peptidoglycan. In Clostridioides difficile (strain 630) (Peptoclostridium difficile), this protein is UDP-N-acetylmuramoyl-L-alanyl-D-glutamate--2,6-diaminopimelate ligase.